The chain runs to 491 residues: Probable glycine dehydrogenase (decarboxylating) subunit 2 (491 aa).

K273 carries the N6-(pyridoxal phosphate)lysine modification.

Belongs to the GcvP family. C-terminal subunit subfamily. The glycine cleavage system is composed of four proteins: P, T, L and H. In this organism, the P 'protein' is a heterodimer of two subunits. Pyridoxal 5'-phosphate is required as a cofactor.

The catalysed reaction is N(6)-[(R)-lipoyl]-L-lysyl-[glycine-cleavage complex H protein] + glycine + H(+) = N(6)-[(R)-S(8)-aminomethyldihydrolipoyl]-L-lysyl-[glycine-cleavage complex H protein] + CO2. In terms of biological role, the glycine cleavage system catalyzes the degradation of glycine. The P protein binds the alpha-amino group of glycine through its pyridoxal phosphate cofactor; CO(2) is released and the remaining methylamine moiety is then transferred to the lipoamide cofactor of the H protein. This chain is Probable glycine dehydrogenase (decarboxylating) subunit 2, found in Bacillus cereus (strain AH187).